The chain runs to 445 residues: MREVISINVGQAGCQIGNACWELYSLEHGIKEDGHLEDGLSKPKGGEEGFSTFFHETGYGKFVPRAIYVDLEPNVIDEVRTGRFKELFHPEQLINGKEDAANNYARGHYTVGREIVDEVEERIRKMADQCDGLQGFLFTHSLGGGTGSGLGSLLLENLSYEYGKKSKLEFAVYPAPQLSTSVVEPYNTVLTTHTTLEHADCTFMVDNEAIYDICKRNLGISRPSFSNLNGLIAQVISSVTASLRFDGSLNVDLNEFQTNLVPYPRIHFPLVSYAPILSKKRATHESNSVSEITNACFEPGNQMVKCDPTKGKYMANCLLYRGDVVTRDVQRAVEQVKNKKTVQMVDWCPTGFKIGICYEPPSVIPSSELANVDRAVCMLSNTTAIADAWKRIDQKFDLMYAKRAFVHWYVGEGMEEGEFTEAREDLAALERDYIEVGADSYAEEF.

Residues glutamine 11, glutamate 72, serine 141, glycine 145, threonine 146, threonine 180, asparagine 207, and asparagine 229 each contribute to the GTP site. Glutamate 72 is a binding site for Mg(2+). Residue glutamate 255 is part of the active site.

The protein belongs to the tubulin family. In terms of assembly, dimer of alpha and beta chains. A typical microtubule is a hollow water-filled tube with an outer diameter of 25 nm and an inner diameter of 15 nM. Alpha-beta heterodimers associate head-to-tail to form protofilaments running lengthwise along the microtubule wall with the beta-tubulin subunit facing the microtubule plus end conferring a structural polarity. Microtubules usually have 13 protofilaments but different protofilament numbers can be found in some organisms and specialized cells. Interacts with NUM1. Mg(2+) serves as cofactor.

Its subcellular location is the cytoplasm. It localises to the cytoskeleton. It carries out the reaction GTP + H2O = GDP + phosphate + H(+). In terms of biological role, tubulin is the major constituent of microtubules, a cylinder consisting of laterally associated linear protofilaments composed of alpha- and beta-tubulin heterodimers. Microtubules grow by the addition of GTP-tubulin dimers to the microtubule end, where a stabilizing cap forms. Below the cap, tubulin dimers are in GDP-bound state, owing to GTPase activity of alpha-tubulin. The chain is Tubulin alpha-3 chain (TUB3) from Saccharomyces cerevisiae (strain ATCC 204508 / S288c) (Baker's yeast).